The chain runs to 357 residues: Phosphoribosylformylglycinamidine cyclo-ligase (357 aa).

This sequence belongs to the AIR synthase family.

It is found in the cytoplasm. It carries out the reaction 2-formamido-N(1)-(5-O-phospho-beta-D-ribosyl)acetamidine + ATP = 5-amino-1-(5-phospho-beta-D-ribosyl)imidazole + ADP + phosphate + H(+). It participates in purine metabolism; IMP biosynthesis via de novo pathway; 5-amino-1-(5-phospho-D-ribosyl)imidazole from N(2)-formyl-N(1)-(5-phospho-D-ribosyl)glycinamide: step 2/2. The chain is Phosphoribosylformylglycinamidine cyclo-ligase from Rhodopseudomonas palustris (strain BisB18).